The following is a 57-amino-acid chain: Andropin (57 aa).

Residues 1-23 (MKYFVVLVVLALILAITVDPSDA) form the signal peptide.

It belongs to the andropin family. As to expression, ejaculatory duct of adult males.

The protein resides in the secreted. Its function is as follows. Male-specific peptide with moderate activity against Gram-positive bacteria. The polypeptide is Andropin (Anp) (Drosophila sechellia (Fruit fly)).